We begin with the raw amino-acid sequence, 278 residues long: Rhamnulose-1-phosphate aldolase (278 aa).

Residue Glu116 is part of the active site. Positions 139, 141, and 210 each coordinate Zn(2+).

Belongs to the aldolase class II family. RhaD subfamily. The cofactor is Zn(2+).

It localises to the cytoplasm. The enzyme catalyses L-rhamnulose 1-phosphate = (S)-lactaldehyde + dihydroxyacetone phosphate. The protein operates within carbohydrate degradation; L-rhamnose degradation; glycerone phosphate from L-rhamnose: step 3/3. In terms of biological role, catalyzes the reversible cleavage of L-rhamnulose-1-phosphate to dihydroxyacetone phosphate (DHAP) and L-lactaldehyde. This Listeria welshimeri serovar 6b (strain ATCC 35897 / DSM 20650 / CCUG 15529 / CIP 8149 / NCTC 11857 / SLCC 5334 / V8) protein is Rhamnulose-1-phosphate aldolase.